The following is a 206-amino-acid chain: Superoxide dismutase [Mn] (206 aa).

Histidine 30, histidine 78, aspartate 166, and histidine 170 together coordinate Mn(2+).

It belongs to the iron/manganese superoxide dismutase family. In terms of assembly, homodimer. Mn(2+) serves as cofactor.

The catalysed reaction is 2 superoxide + 2 H(+) = H2O2 + O2. Its function is as follows. Destroys superoxide anion radicals which are normally produced within the cells and which are toxic to biological systems. In Chlamydia trachomatis serovar D (strain ATCC VR-885 / DSM 19411 / UW-3/Cx), this protein is Superoxide dismutase [Mn] (sodA).